A 352-amino-acid chain; its full sequence is N-acetyl-gamma-glutamyl-phosphate reductase (352 aa).

Cysteine 156 is a catalytic residue.

This sequence belongs to the NAGSA dehydrogenase family. Type 1 subfamily.

It is found in the cytoplasm. It catalyses the reaction N-acetyl-L-glutamate 5-semialdehyde + phosphate + NADP(+) = N-acetyl-L-glutamyl 5-phosphate + NADPH + H(+). It participates in amino-acid biosynthesis; L-arginine biosynthesis; N(2)-acetyl-L-ornithine from L-glutamate: step 3/4. Its function is as follows. Catalyzes the NADPH-dependent reduction of N-acetyl-5-glutamyl phosphate to yield N-acetyl-L-glutamate 5-semialdehyde. The chain is N-acetyl-gamma-glutamyl-phosphate reductase from Afipia carboxidovorans (strain ATCC 49405 / DSM 1227 / KCTC 32145 / OM5) (Oligotropha carboxidovorans).